Here is a 795-residue protein sequence, read N- to C-terminus: Volume-regulated anion channel subunit LRRC8E (795 aa).

Residues 1–22 (MIPVAEFKQFTEQQPAFKVLKP) lie on the Cytoplasmic side of the membrane. A helical transmembrane segment spans residues 23-43 (WWDVLAEYLTVAMLMIGVFGC). The Extracellular portion of the chain corresponds to 44–116 (TLQVTQDKII…YETALHWYAK (73 aa)). The cysteines at positions 54 and 300 are disulfide-linked. The N-linked (GlcNAc...) asparagine glycan is linked to N63. The helical transmembrane segment at 117 to 137 (YFPYLVVIHTLIFMVCTSFWF) threads the bilayer. Over 138-264 (KFPGTSSKIE…IRQTVLKVCK (127 aa)) the chain is Cytoplasmic. Residues 265-285 (FFAILVYNLIYVEKISFLVAC) traverse the membrane as a helical segment. The Extracellular segment spans residues 286–312 (RVETSEITGYASFCCNHTKAHLFSKLA). N301 is a glycosylation site (N-linked (GlcNAc...) asparagine). A helical membrane pass occupies residues 313–333 (FCYISFVCVYGITCLYTLYWL). The Cytoplasmic segment spans residues 334 to 795 (FHRPLKEYSF…AEVREKMEEE (462 aa)). 10 LRR repeats span residues 535 to 556 (QLKVLSLRSNAGKVPASVTDVA), 558 to 578 (HLQRLSLHNDGARLLALNSLK), 582 to 603 (VLRELELVACGLERIPHAIFSL), 605 to 626 (ALQELDLKDNHLRSIEEILSFQ), 630 to 651 (KLVTLRLWHNQIAYVPEHVRKL), 653 to 674 (SLEQLYLSHNKLETLPTQLGQC), 676 to 697 (GLRLLDLSHNGLRSLPPELGLL), 699 to 720 (SLQHLALSYNALESLPDELFFC), 722 to 744 (KLRTLLLGYNHLTQLSPDVAALQ), and 745 to 766 (ALSRLELKGNRLETLPEELGDC).

The protein belongs to the LRRC8 family. Heterohexamer; oligomerizes with other LRRC8 proteins (LRRC8A, LRRC8C, LRRC8D and/or LRRC8B) to form a heterohexamer. In vivo, the subunit composition may depend primarily on expression levels, and heterooligomeric channels containing various proportions of the different LRRC8 proteins may coexist.

The protein resides in the cell membrane. It localises to the endoplasmic reticulum membrane. It is found in the lysosome membrane. It catalyses the reaction chloride(in) = chloride(out). The catalysed reaction is iodide(out) = iodide(in). It carries out the reaction taurine(out) = taurine(in). The enzyme catalyses 2',3'-cGAMP(out) = 2',3'-cGAMP(in). Its function is as follows. Non-essential component of the volume-regulated anion channel (VRAC, also named VSOAC channel), an anion channel required to maintain a constant cell volume in response to extracellular or intracellular osmotic changes. The VRAC channel conducts iodide better than chloride and can also conduct organic osmolytes like taurine. Mediates efflux of amino acids, such as aspartate, in response to osmotic stress. The VRAC channel also mediates transport of immunoreactive cyclic dinucleotide GMP-AMP (2'-3'-cGAMP), an immune messenger produced in response to DNA virus in the cytosol. Channel activity requires LRRC8A plus at least one other family member (LRRC8B, LRRC8C, LRRC8D or LRRC8E); channel characteristics depend on the precise subunit composition. Also plays a role in lysosome homeostasis by forming functional lysosomal VRAC channels in response to low cytoplasmic ionic strength condition: lysosomal VRAC channels are necessary for the formation of large lysosome-derived vacuoles, which store and then expel excess water to maintain cytosolic water homeostasis. The protein is Volume-regulated anion channel subunit LRRC8E of Mus musculus (Mouse).